The following is a 637-amino-acid chain: MGVRSAAKEMHERDHNSDSSSLVTSLMKSWRISSASSSKKPSLYKMNTTESTSLPSGYASSADRDRRTSDGNFEAMAKQQASTRRTSNSYSPLRYVNPTLSTASNESPRPALLLRQHHQRHHHHQQPRHSSSGSVGNNCSNSTEPNKKGDRYFKDLDEDWSAVIDDYNMPIPILTNGGFGTPVAPTRTLSRKSTSSSINSISNMGTSAVRNSSSSFTYPQLPQLQKEKTNDSKKTQLEIENERDVQELNSIIQRISKFDNILKDKTIINQQDLRQISWNGIPKIHRPVVWKLLIGYLPVNTKRQEGFLQRKRKEYRDSLKHTFSDQHSRDIPTWHQIEIDIPRTNPHIPLYQFKSVQNSLQRILYLWAIRHPASGYVQGINDLVTPFFETFLTEYLPPSQIDDVEIKDPSTYMVDEQITDLEADTFWCLTKLLEQITDNYIHGQPGILRQVKNLSQLVKRIDADLYNHFQNEHVEFIQFAFRWMNCLLMREFQMGTVIRMWDTYLSETSQEVTSSYSMSSNDIKPPVTPTEPRVASFVTPTKDFQSPTTALSNMTPNNAVEDSGKMRQSSLNEFHVFVCAAFLIKWSDQLMEMDFQETITFLQNPPTKDWTETDIEMLLSEAFIWQSLYKDATSHWL.

Residues 1–17 are compositionally biased toward basic and acidic residues; sequence MGVRSAAKEMHERDHNS. Disordered regions lie at residues 1–152 and 187–233; these read MGVR…GDRY and RTLS…NDSK. Over residues 18–27 the composition is skewed to polar residues; the sequence is DSSSLVTSLM. Positions 28–45 are enriched in low complexity; that stretch reads KSWRISSASSSKKPSLYK. Polar residues predominate over residues 46 to 59; sequence MNTTESTSLPSGYA. Residue Ser-69 is modified to Phosphoserine. 2 stretches are compositionally biased toward polar residues: residues 79 to 91 and 98 to 107; these read QQAS…NSYS and PTLSTASNES. Residues 115-127 are compositionally biased toward basic residues; that stretch reads RQHHQRHHHHQQP. Low complexity-rich tracts occupy residues 128–142 and 187–207; these read RHSS…CSNS and RTLS…MGTS. Over residues 208-223 the composition is skewed to polar residues; sequence AVRNSSSSFTYPQLPQ. Residue Ser-250 is modified to Phosphoserine. Residues 280-508 enclose the Rab-GAP TBC domain; that stretch reads GIPKIHRPVV…RMWDTYLSET (229 aa). Residues 543–564 form a disordered region; it reads DFQSPTTALSNMTPNNAVEDSG.

The protein localises to the golgi apparatus. It localises to the golgi stack. Its function is as follows. GTPase-activating protein (GAP) that stimulates specifically the intrinsic GTPase activity of Ypt/Rab-type GTPases YPT1 and YPT7. Functions on the Golgi as a negative regulator of YPT1. Functions on the vacuole as a negative regulator of YPT7. It is also active on SEC4 and YPT51. Provides a catalytic arginine (arginine finger) and glutamine (glutamine finger) in trans to accelerate the GTP hydrolysis rate of the substrate GTPase. The polypeptide is GTPase-activating protein GYP1 (GYP1) (Saccharomyces cerevisiae (strain ATCC 204508 / S288c) (Baker's yeast)).